Consider the following 320-residue polypeptide: ATP-dependent 6-phosphofructokinase (320 aa).

Glycine 11 is a binding site for ATP. Arginine 21–lysine 25 contacts ADP. ATP is bound by residues arginine 72–phenylalanine 73 and glycine 102–serine 105. Mg(2+) is bound at residue aspartate 103. Threonine 125–aspartate 127 serves as a coordination point for substrate. Catalysis depends on aspartate 127, which acts as the Proton acceptor. Position 154 (arginine 154) interacts with ADP. Substrate is bound by residues arginine 162 and methionine 169–arginine 171. Residues glycine 185–aspartate 187 and lysine 213–histidine 215 contribute to the ADP site. Substrate-binding positions include glutamate 222, arginine 243, and histidine 249–arginine 252.

It belongs to the phosphofructokinase type A (PFKA) family. ATP-dependent PFK group I subfamily. Prokaryotic clade 'B1' sub-subfamily. In terms of assembly, homotetramer. Mg(2+) is required as a cofactor.

It is found in the cytoplasm. The enzyme catalyses beta-D-fructose 6-phosphate + ATP = beta-D-fructose 1,6-bisphosphate + ADP + H(+). The protein operates within carbohydrate degradation; glycolysis; D-glyceraldehyde 3-phosphate and glycerone phosphate from D-glucose: step 3/4. With respect to regulation, allosterically activated by ADP and other diphosphonucleosides, and allosterically inhibited by phosphoenolpyruvate. Its function is as follows. Catalyzes the phosphorylation of D-fructose 6-phosphate to fructose 1,6-bisphosphate by ATP, the first committing step of glycolysis. This chain is ATP-dependent 6-phosphofructokinase, found in Lactobacillus helveticus (strain DPC 4571).